An 88-amino-acid chain; its full sequence is Small ribosomal subunit protein bS16c (88 aa).

The protein belongs to the bacterial ribosomal protein bS16 family.

Its subcellular location is the plastid. It localises to the chloroplast. The protein is Small ribosomal subunit protein bS16c of Coffea arabica (Arabian coffee).